Reading from the N-terminus, the 430-residue chain is Probable histidine--tRNA ligase, cytoplasmic (430 aa).

It belongs to the class-II aminoacyl-tRNA synthetase family.

It is found in the cytoplasm. It catalyses the reaction tRNA(His) + L-histidine + ATP = L-histidyl-tRNA(His) + AMP + diphosphate + H(+). This is Probable histidine--tRNA ligase, cytoplasmic from Vairimorpha ceranae (strain BRL01) (Microsporidian parasite).